Reading from the N-terminus, the 307-residue chain is 4-hydroxythreonine-4-phosphate dehydrogenase (307 aa).

Residues histidine 126 and threonine 127 each coordinate substrate. Positions 156, 195, and 251 each coordinate a divalent metal cation. Residues lysine 259, asparagine 268, and arginine 277 each coordinate substrate.

The protein belongs to the PdxA family. In terms of assembly, homodimer. Requires Zn(2+) as cofactor. Mg(2+) is required as a cofactor. The cofactor is Co(2+).

The protein localises to the cytoplasm. It carries out the reaction 4-(phosphooxy)-L-threonine + NAD(+) = 3-amino-2-oxopropyl phosphate + CO2 + NADH. It participates in cofactor biosynthesis; pyridoxine 5'-phosphate biosynthesis; pyridoxine 5'-phosphate from D-erythrose 4-phosphate: step 4/5. In terms of biological role, catalyzes the NAD(P)-dependent oxidation of 4-(phosphooxy)-L-threonine (HTP) into 2-amino-3-oxo-4-(phosphooxy)butyric acid which spontaneously decarboxylates to form 3-amino-2-oxopropyl phosphate (AHAP). This is 4-hydroxythreonine-4-phosphate dehydrogenase from Helicobacter pylori (strain Shi470).